The primary structure comprises 119 residues: Ribonuclease P protein component (119 aa).

It belongs to the RnpA family. In terms of assembly, consists of a catalytic RNA component (M1 or rnpB) and a protein subunit.

It carries out the reaction Endonucleolytic cleavage of RNA, removing 5'-extranucleotides from tRNA precursor.. In terms of biological role, RNaseP catalyzes the removal of the 5'-leader sequence from pre-tRNA to produce the mature 5'-terminus. It can also cleave other RNA substrates such as 4.5S RNA. The protein component plays an auxiliary but essential role in vivo by binding to the 5'-leader sequence and broadening the substrate specificity of the ribozyme. The sequence is that of Ribonuclease P protein component from Erwinia tasmaniensis (strain DSM 17950 / CFBP 7177 / CIP 109463 / NCPPB 4357 / Et1/99).